The sequence spans 630 residues: Transposase B from transposon Tn554 (630 aa).

Residues 216-302 (TYFKQLVKRY…ILEGLFSTLL (87 aa)) enclose the Core-binding (CB) domain. Positions 326–513 (AKPRFIDEFV…FDETLKNEFT (188 aa)) constitute a Tyr recombinase domain. Residues arginine 363, lysine 391, histidine 465, arginine 468, and histidine 491 contribute to the active site. Catalysis depends on tyrosine 500, which acts as the O-(3'-phospho-DNA)-tyrosine intermediate.

Belongs to the 'phage' integrase family.

In terms of biological role, one of three proteins encoded by transposon Tn554 required for its transposition. The polypeptide is Transposase B from transposon Tn554 (tnpB1) (Staphylococcus aureus (strain Mu50 / ATCC 700699)).